The following is a 636-amino-acid chain: 1-phosphatidylinositol 4,5-bisphosphate phosphodiesterase zeta-1 (636 aa).

An EF-hand domain is found at 35–70; it reads CNTIHVKCIFKDNDRLKQGRITIEEFRTIYRIIAHR. Residues 155–299 enclose the PI-PLC X-box domain; sequence QDMTHPLSDY…LKFKILVRNK (145 aa). Residues histidine 170 and histidine 215 contribute to the active site. The interval 311-338 is disordered; that stretch reads KGFDKHGQVQECEEEEEAEQEEEENEVR. The stretch at 318–345 forms a coiled coil; the sequence is QVQECEEEEEAEQEEEENEVRDSEILDI. Residues 321 to 336 are compositionally biased toward acidic residues; sequence ECEEEEEAEQEEEENE. The PI-PLC Y-box domain maps to 375–491; sequence LSDLVIYTKV…GYILKPHFLR (117 aa). The region spanning 491 to 617 is the C2 domain; that stretch reads RDGKSIFNPN…KGYRRVPLFS (127 aa).

In terms of assembly, interacts via its C2 domain with PtdIns(3)P and, to a lesser extent, PtdIns(5)P in vitro. Ca(2+) serves as cofactor. As to expression, expressed specifically in testis.

It is found in the nucleus. Its subcellular location is the cytoplasm. The protein localises to the perinuclear region. It catalyses the reaction a 1,2-diacyl-sn-glycero-3-phospho-(1D-myo-inositol-4,5-bisphosphate) + H2O = 1D-myo-inositol 1,4,5-trisphosphate + a 1,2-diacyl-sn-glycerol + H(+). Its function is as follows. The production of the second messenger molecules diacylglycerol (DAG) and inositol 1,4,5-trisphosphate (IP3) is mediated by activated phosphatidylinositol-specific phospholipase C enzymes. In vitro, hydrolyzes PtdIns(4,5)P2 in a Ca(2+)-dependent manner. Triggers intracellular Ca(2+) oscillations in oocytes solely during M phase and is involved in inducing oocyte activation and initiating embryonic development up to the blastocyst stage. Is therefore a strong candidate for the egg-activating soluble sperm factor that is transferred from the sperm into the egg cytoplasm following gamete membrane fusion. May exert an inhibitory effect on phospholipase-C-coupled processes that depend on calcium ions and protein kinase C, including CFTR trafficking and function. The sequence is that of 1-phosphatidylinositol 4,5-bisphosphate phosphodiesterase zeta-1 from Sus scrofa (Pig).